We begin with the raw amino-acid sequence, 364 residues long: Nucleosome assembly protein 1;2 (364 aa).

The stretch at 32-86 (VESIKNTLQGLAARHTDVLESLEPKVRKRVEVLREIQSQHDDLEAKFFEERAALE) forms a coiled coil. The Nuclear export signal motif lies at 53–68 (LEPKVRKRVEVLREIQ). Residues 227–232 (KKKPKK) carry the Nuclear localization signal motif. Disordered stretches follow at residues 250-269 (FNFF…DEDT) and 301-364 (GEAA…CKQQ). Composition is skewed to acidic residues over residues 259-269 (PDDDEEIDEDT) and 304-340 (AQDE…DDED). The residue at position 361 (C361) is a Cysteine methyl ester. C361 is lipidated: S-farnesyl cysteine. Positions 362–364 (KQQ) are cleaved as a propeptide — removed in mature form.

The protein belongs to the nucleosome assembly protein (NAP) family. In terms of assembly, binds preferentially histone H1 in vitro. As to expression, highly expressed in tissues exhibiting active cell-division activities, such as root and shoot meristems and young flowers.

It is found in the nucleus. The protein resides in the cytoplasm. May modulate chromatin structure by regulation of nucleosome assembly/disassembly. In Oryza sativa subsp. indica (Rice), this protein is Nucleosome assembly protein 1;2 (NAP1;2).